The primary structure comprises 243 residues: 1-(5-phosphoribosyl)-5-[(5-phosphoribosylamino)methylideneamino] imidazole-4-carboxamide isomerase (243 aa).

Catalysis depends on aspartate 8, which acts as the Proton acceptor. Catalysis depends on aspartate 130, which acts as the Proton donor.

Belongs to the HisA/HisF family.

The protein localises to the cytoplasm. The enzyme catalyses 1-(5-phospho-beta-D-ribosyl)-5-[(5-phospho-beta-D-ribosylamino)methylideneamino]imidazole-4-carboxamide = 5-[(5-phospho-1-deoxy-D-ribulos-1-ylimino)methylamino]-1-(5-phospho-beta-D-ribosyl)imidazole-4-carboxamide. Its pathway is amino-acid biosynthesis; L-histidine biosynthesis; L-histidine from 5-phospho-alpha-D-ribose 1-diphosphate: step 4/9. The chain is 1-(5-phosphoribosyl)-5-[(5-phosphoribosylamino)methylideneamino] imidazole-4-carboxamide isomerase from Cellvibrio japonicus (strain Ueda107) (Pseudomonas fluorescens subsp. cellulosa).